The chain runs to 619 residues: Dihydroxy-acid dehydratase (619 aa).

A Mg(2+)-binding site is contributed by Asp81. Residue Cys122 coordinates [2Fe-2S] cluster. Residues Asp123 and Lys124 each contribute to the Mg(2+) site. Lys124 carries the N6-carboxylysine modification. A [2Fe-2S] cluster-binding site is contributed by Cys195. Glu494 is a Mg(2+) binding site. Ser520 acts as the Proton acceptor in catalysis.

The protein belongs to the IlvD/Edd family. In terms of assembly, homodimer. Requires [2Fe-2S] cluster as cofactor. Mg(2+) is required as a cofactor.

It catalyses the reaction (2R)-2,3-dihydroxy-3-methylbutanoate = 3-methyl-2-oxobutanoate + H2O. The enzyme catalyses (2R,3R)-2,3-dihydroxy-3-methylpentanoate = (S)-3-methyl-2-oxopentanoate + H2O. It functions in the pathway amino-acid biosynthesis; L-isoleucine biosynthesis; L-isoleucine from 2-oxobutanoate: step 3/4. It participates in amino-acid biosynthesis; L-valine biosynthesis; L-valine from pyruvate: step 3/4. Functionally, functions in the biosynthesis of branched-chain amino acids. Catalyzes the dehydration of (2R,3R)-2,3-dihydroxy-3-methylpentanoate (2,3-dihydroxy-3-methylvalerate) into 2-oxo-3-methylpentanoate (2-oxo-3-methylvalerate) and of (2R)-2,3-dihydroxy-3-methylbutanoate (2,3-dihydroxyisovalerate) into 2-oxo-3-methylbutanoate (2-oxoisovalerate), the penultimate precursor to L-isoleucine and L-valine, respectively. The chain is Dihydroxy-acid dehydratase from Shewanella putrefaciens (strain CN-32 / ATCC BAA-453).